The sequence spans 299 residues: Ribosomal protein L11 methyltransferase (299 aa).

The S-adenosyl-L-methionine site is built by Thr152, Gly172, Asp194, and Asn234.

It belongs to the methyltransferase superfamily. PrmA family.

The protein resides in the cytoplasm. It catalyses the reaction L-lysyl-[protein] + 3 S-adenosyl-L-methionine = N(6),N(6),N(6)-trimethyl-L-lysyl-[protein] + 3 S-adenosyl-L-homocysteine + 3 H(+). Methylates ribosomal protein L11. This Geobacter metallireducens (strain ATCC 53774 / DSM 7210 / GS-15) protein is Ribosomal protein L11 methyltransferase.